A 367-amino-acid polypeptide reads, in one-letter code: Protein SGT1 homolog (367 aa).

3 TPR repeats span residues 6–39, 40–73, and 75–107; these read ASDL…SPAT, AELY…DPSM, and KAYL…ASGD. In terms of domain architecture, CS spans 165–254; the sequence is KPKYRHDFYN…AEQITWTSLD (90 aa). Disordered regions lie at residues 261-289 and 347-367; these read AVPQ…DWDK and VGSK…KWEY. The 91-residue stretch at 277–367 folds into the SGS domain; that stretch reads SYPSSKSKKD…DGMELKKWEY (91 aa).

It belongs to the SGT1 family. In terms of assembly, interacts (via CS domain) with RAR1 (via CHORD 2 domain). Interacts with RAD6. As to expression, expressed in roots, root tips, shoot apical meristem (SAM), young leaves, flag leaves and ears.

It is found in the cytoplasm. The protein localises to the nucleus. Its function is as follows. Involved in basal disease resistance to bacterial blight (X.oryzae). May act as positive regulator of basal defense. Probably required for SCF-mediated ubiquitination, by coupling HSP90 to SCF complex for ubiquitination of HSP90 client proteins. This is Protein SGT1 homolog from Oryza sativa subsp. japonica (Rice).